The sequence spans 478 residues: Glycogen synthase (478 aa).

Lys-16 is an ADP-alpha-D-glucose binding site.

This sequence belongs to the glycosyltransferase 1 family. Bacterial/plant glycogen synthase subfamily.

It carries out the reaction [(1-&gt;4)-alpha-D-glucosyl](n) + ADP-alpha-D-glucose = [(1-&gt;4)-alpha-D-glucosyl](n+1) + ADP + H(+). The protein operates within glycan biosynthesis; glycogen biosynthesis. Synthesizes alpha-1,4-glucan chains using ADP-glucose. This chain is Glycogen synthase, found in Lachnospira eligens (strain ATCC 27750 / DSM 3376 / VPI C15-48 / C15-B4) (Eubacterium eligens).